The sequence spans 418 residues: Putative ion-transport protein YfeO (418 aa).

The next 11 helical transmembrane spans lie at 9–31 (MLLL…IMVM), 55–77 (SPLW…IRFS), 90–112 (LIGA…LGLA), 122–140 (PIIT…RLLP), 147–169 (WTIL…AALI), 189–211 (PLMA…FSLP), 223–244 (ILSG…VWCL), 259–281 (FVLG…VSLF), 301–323 (YFLL…FRGG), 343–363 (VPAV…VLVV), and 376–398 (VVVP…WLLL).

It belongs to the chloride channel (TC 2.A.49) family.

The protein localises to the cell membrane. The polypeptide is Putative ion-transport protein YfeO (yfeO) (Escherichia coli O6:H1 (strain CFT073 / ATCC 700928 / UPEC)).